A 177-amino-acid polypeptide reads, in one-letter code: Translation initiation factor IF-3 (177 aa).

The protein belongs to the IF-3 family. In terms of assembly, monomer.

The protein resides in the cytoplasm. In terms of biological role, IF-3 binds to the 30S ribosomal subunit and shifts the equilibrium between 70S ribosomes and their 50S and 30S subunits in favor of the free subunits, thus enhancing the availability of 30S subunits on which protein synthesis initiation begins. The chain is Translation initiation factor IF-3 from Nitratiruptor sp. (strain SB155-2).